The sequence spans 193 residues: Imidazoleglycerol-phosphate dehydratase (193 aa).

It belongs to the imidazoleglycerol-phosphate dehydratase family.

It is found in the cytoplasm. It catalyses the reaction D-erythro-1-(imidazol-4-yl)glycerol 3-phosphate = 3-(imidazol-4-yl)-2-oxopropyl phosphate + H2O. It functions in the pathway amino-acid biosynthesis; L-histidine biosynthesis; L-histidine from 5-phospho-alpha-D-ribose 1-diphosphate: step 6/9. This Saccharolobus islandicus (strain M.14.25 / Kamchatka #1) (Sulfolobus islandicus) protein is Imidazoleglycerol-phosphate dehydratase.